Reading from the N-terminus, the 411-residue chain is Tyrosine--tRNA ligase (411 aa).

Positions 50 to 59 match the 'HIGH' region motif; sequence PTRPDLHLGH. The 'KMSKS' region motif lies at 236 to 240; it reads KMSKS. Position 239 (Lys239) interacts with ATP. The 65-residue stretch at 345 to 409 folds into the S4 RNA-binding domain; it reads VSMAKLVVLA…GKDKFARLVL (65 aa).

It belongs to the class-I aminoacyl-tRNA synthetase family. TyrS type 2 subfamily. In terms of assembly, homodimer.

It is found in the cytoplasm. It carries out the reaction tRNA(Tyr) + L-tyrosine + ATP = L-tyrosyl-tRNA(Tyr) + AMP + diphosphate + H(+). In terms of biological role, catalyzes the attachment of tyrosine to tRNA(Tyr) in a two-step reaction: tyrosine is first activated by ATP to form Tyr-AMP and then transferred to the acceptor end of tRNA(Tyr). The chain is Tyrosine--tRNA ligase from Deinococcus radiodurans (strain ATCC 13939 / DSM 20539 / JCM 16871 / CCUG 27074 / LMG 4051 / NBRC 15346 / NCIMB 9279 / VKM B-1422 / R1).